The sequence spans 189 residues: MAERGSDIRPGYVLEHNNALYLVVKIMHTQPGKGGAYIQAEMKNLKTGAKQYERFRADGDIKRAILDEADYQYIYGDDSMLTVMHLGNYEQITIKKDILGDKSIYLKDNMVITLLSYNGEIISAKVPDYVTLQVIETEAVIKGQTVSSSSYKVAMLENNQRINVPTFIKSGDKIVVYTPDDSYYERAKE.

The protein belongs to the elongation factor P family.

It localises to the cytoplasm. Its pathway is protein biosynthesis; polypeptide chain elongation. Functionally, involved in peptide bond synthesis. Stimulates efficient translation and peptide-bond synthesis on native or reconstituted 70S ribosomes in vitro. Probably functions indirectly by altering the affinity of the ribosome for aminoacyl-tRNA, thus increasing their reactivity as acceptors for peptidyl transferase. The polypeptide is Elongation factor P (Ehrlichia ruminantium (strain Gardel)).